The primary structure comprises 72 residues: Cytochrome c oxidase copper chaperone 2 (72 aa).

Cu cation contacts are provided by C32 and C33. The region spanning 32–72 (CCACPDTKKLRDECIVEHGESACTKWIEAHILCLRSEGFKV) is the CHCH domain. 2 short sequence motifs (cx9C motif) span residues 35 to 45 (CPDTKKLRDEC) and 54 to 64 (CTKWIEAHILC). Cystine bridges form between C35-C64 and C45-C54.

This sequence belongs to the COX17 family.

Its subcellular location is the mitochondrion intermembrane space. Its function is as follows. Copper chaperone for cytochrome c oxidase (COX). Binds 2 copper ions and delivers them to the Cu(A) site of COX. The protein is Cytochrome c oxidase copper chaperone 2 (COX17-2) of Arabidopsis thaliana (Mouse-ear cress).